The primary structure comprises 1047 residues: Ubiquitin carboxyl-terminal hydrolase 28 (1047 aa).

Disordered stretches follow at residues 60-95 (DQEPVQNTAAAEPSSWEGSAVGKEPPQGGAAFDPEK) and 110-138 (SPKAHAAERPQEVHSPEHKNRSKRKRCEV). In terms of domain architecture, UIM spans 94–113 (EKKGDVHSAVAYGQLESPKA). Positions 111–128 (PKAHAAERPQEVHSPEHK) are enriched in basic and acidic residues. Residues 156-651 (VGMKNIGNTC…SAYCLMYISD (496 aa)) form the USP domain. The active-site Nucleophile is the cysteine 165. Residues 461-486 (STEDSQMMDRQSQGESLILGTPSQPD) are compositionally biased toward polar residues. The disordered stretch occupies residues 461–528 (STEDSQMMDR…SEPPAEMSDC (68 aa)). The segment covering 489–498 (LDGKDGKPED) has biased composition (basic and acidic residues). Residues 504 to 516 (ANSSPQQQLNAPL) show a composition bias toward polar residues. Histidine 601 (proton acceptor) is an active-site residue. Positions 694–735 (EAEEWEEEQSCKIPSTASESQELSPESGLDPPAAHEQSLRSL) are disordered. Residues 705–717 (KIPSTASESQELS) are compositionally biased toward polar residues.

The protein belongs to the peptidase C19 family. USP28 subfamily.

The protein resides in the nucleus. Its subcellular location is the nucleoplasm. The catalysed reaction is Thiol-dependent hydrolysis of ester, thioester, amide, peptide and isopeptide bonds formed by the C-terminal Gly of ubiquitin (a 76-residue protein attached to proteins as an intracellular targeting signal).. Deubiquitinase involved in DNA damage response checkpoint and MYC proto-oncogene stability. Involved in DNA damage induced apoptosis by specifically deubiquitinating proteins of the DNA damage pathway such as CLSPN. Also involved in G2 DNA damage checkpoint, by deubiquitinating CLSPN, and preventing its degradation by the anaphase promoting complex/cyclosome (APC/C). Specifically deubiquitinates MYC in the nucleoplasm, leading to prevent MYC degradation by the proteasome. Deubiquitinates ZNF304, hence may prevent ZNF304 degradation by the proteasome, leading to the activated KRAS-mediated promoter hypermethylation and transcriptional silencing of tumor suppressor genes (TSGs). The chain is Ubiquitin carboxyl-terminal hydrolase 28 (USP28) from Gallus gallus (Chicken).